Reading from the N-terminus, the 350-residue chain is Small ribosomal subunit protein uS3 (350 aa).

One can recognise a KH type-2 domain in the interval 38–106 (IRKMMSRGME…QVQLNILEVK (69 aa)). The interval 211-350 (AEREAQEALQ…TPGTPEKAEE (140 aa)) is disordered. Basic residues predominate over residues 222–232 (QTRRDRPRRGP). Over residues 261–350 (NAPAAETAAS…TPGTPEKAEE (90 aa)) the composition is skewed to low complexity.

This sequence belongs to the universal ribosomal protein uS3 family. Part of the 30S ribosomal subunit. Forms a tight complex with proteins S10 and S14.

Its function is as follows. Binds the lower part of the 30S subunit head. Binds mRNA in the 70S ribosome, positioning it for translation. The sequence is that of Small ribosomal subunit protein uS3 from Frankia alni (strain DSM 45986 / CECT 9034 / ACN14a).